Here is a 150-residue protein sequence, read N- to C-terminus: Probable antibacterial peptide (150 aa).

The first 19 residues, 1-19 (MHIARFCLLSSMAVLALSA), serve as a signal peptide directing secretion.

The protein resides in the secreted. Has antibacterial activity in vitro. The protein is Probable antibacterial peptide of Riptortus clavatus (Bean bug).